A 542-amino-acid chain; its full sequence is CTP synthase (542 aa).

The segment at M1–L265 is amidoligase domain. CTP is bound at residue S13. S13 lines the UTP pocket. Residues S14–I19 and D71 each bind ATP. D71 and E139 together coordinate Mg(2+). CTP-binding positions include D146–E148, K186–Q191, and K222. Residues K186 to Q191 and K222 contribute to the UTP site. The region spanning V290 to E541 is the Glutamine amidotransferase type-1 domain. G352 provides a ligand contact to L-glutamine. C379 acts as the Nucleophile; for glutamine hydrolysis in catalysis. Residues L380–Q383, E403, and R471 contribute to the L-glutamine site. Residues H514 and E516 contribute to the active site.

This sequence belongs to the CTP synthase family. As to quaternary structure, homotetramer.

The catalysed reaction is UTP + L-glutamine + ATP + H2O = CTP + L-glutamate + ADP + phosphate + 2 H(+). It catalyses the reaction L-glutamine + H2O = L-glutamate + NH4(+). The enzyme catalyses UTP + NH4(+) + ATP = CTP + ADP + phosphate + 2 H(+). The protein operates within pyrimidine metabolism; CTP biosynthesis via de novo pathway; CTP from UDP: step 2/2. Allosterically activated by GTP, when glutamine is the substrate; GTP has no effect on the reaction when ammonia is the substrate. The allosteric effector GTP functions by stabilizing the protein conformation that binds the tetrahedral intermediate(s) formed during glutamine hydrolysis. Inhibited by the product CTP, via allosteric rather than competitive inhibition. Its function is as follows. Catalyzes the ATP-dependent amination of UTP to CTP with either L-glutamine or ammonia as the source of nitrogen. Regulates intracellular CTP levels through interactions with the four ribonucleotide triphosphates. This is CTP synthase from Sulfurimonas denitrificans (strain ATCC 33889 / DSM 1251) (Thiomicrospira denitrificans (strain ATCC 33889 / DSM 1251)).